Reading from the N-terminus, the 166-residue chain is Phosphopantetheine adenylyltransferase (166 aa).

Substrate is bound at residue Ser-9. Residues Ser-9–Phe-10 and His-17 each bind ATP. 3 residues coordinate substrate: Lys-41, Thr-74, and Arg-88. ATP contacts are provided by residues Gly-89–Arg-91, Glu-99, and Asp-124–Ser-130.

Belongs to the bacterial CoaD family. Homohexamer. Mg(2+) is required as a cofactor.

It is found in the cytoplasm. The enzyme catalyses (R)-4'-phosphopantetheine + ATP + H(+) = 3'-dephospho-CoA + diphosphate. The protein operates within cofactor biosynthesis; coenzyme A biosynthesis; CoA from (R)-pantothenate: step 4/5. In terms of biological role, reversibly transfers an adenylyl group from ATP to 4'-phosphopantetheine, yielding dephospho-CoA (dPCoA) and pyrophosphate. The chain is Phosphopantetheine adenylyltransferase from Lactobacillus gasseri (strain ATCC 33323 / DSM 20243 / BCRC 14619 / CIP 102991 / JCM 1131 / KCTC 3163 / NCIMB 11718 / NCTC 13722 / AM63).